Here is an 87-residue protein sequence, read N- to C-terminus: Small ribosomal subunit protein bS20 (87 aa).

Residues 1–22 form a disordered region; that stretch reads MANIKSQIKRNKTNEKARLRNQ.

The protein belongs to the bacterial ribosomal protein bS20 family.

Binds directly to 16S ribosomal RNA. The protein is Small ribosomal subunit protein bS20 of Corynebacterium glutamicum (strain R).